Here is a 376-residue protein sequence, read N- to C-terminus: Dehydrogenase/reductase SDR family member FEY (376 aa).

S2 carries the N-acetylserine modification. 61-85 (VVTGSTSGIGRETARQLAEAGAHVV) is an NAD(+) binding site. Substrate is bound at residue S199. Y227 serves as the catalytic Proton acceptor.

The protein belongs to the short-chain dehydrogenases/reductases (SDR) family. As to expression, expressed in roots, stems, leaves and flowers and, at lower levels, in siliques.

Its function is as follows. Putative oxidoreductase. Required for vegetative shoot apex development, especially during leaf positioning and for shoot apical meristem (SAM) maintenance. This is Dehydrogenase/reductase SDR family member FEY from Arabidopsis thaliana (Mouse-ear cress).